Reading from the N-terminus, the 31-residue chain is Photosystem II reaction center protein T (31 aa).

A helical transmembrane segment spans residues 3 to 23; sequence ALVYTFLLIGTLGIIFFAIFF.

This sequence belongs to the PsbT family. As to quaternary structure, PSII is composed of 1 copy each of membrane proteins PsbA, PsbB, PsbC, PsbD, PsbE, PsbF, PsbH, PsbI, PsbJ, PsbK, PsbL, PsbM, PsbT, PsbY, PsbZ, Psb30/Ycf12, at least 3 peripheral proteins of the oxygen-evolving complex and a large number of cofactors. It forms dimeric complexes.

It is found in the plastid. Its subcellular location is the chloroplast thylakoid membrane. Found at the monomer-monomer interface of the photosystem II (PS II) dimer, plays a role in assembly and dimerization of PSII. PSII is a light-driven water plastoquinone oxidoreductase, using light energy to abstract electrons from H(2)O, generating a proton gradient subsequently used for ATP formation. This is Photosystem II reaction center protein T from Tetradesmus obliquus (Green alga).